The primary structure comprises 525 residues: Mitochondrial-processing peptidase subunit alpha (525 aa).

Residues 1-33 (MAAMVLAATRLLRGSGSWGRSRPRFGDPAYRRF) constitute a mitochondrion transit peptide. Lysine 64 bears the N6-succinyllysine mark. Lysine 299 is subject to N6-acetyllysine.

Belongs to the peptidase M16 family. Heterodimer of PMPCA (alpha) and PMPCB (beta) subunits, forming the mitochondrial processing protease (MPP) in which PMPCA is involved in substrate recognition and binding and PMPCB is the catalytic subunit.

It localises to the mitochondrion matrix. It is found in the mitochondrion inner membrane. In terms of biological role, substrate recognition and binding subunit of the essential mitochondrial processing protease (MPP), which cleaves the mitochondrial sequence off newly imported precursors proteins. This is Mitochondrial-processing peptidase subunit alpha (PMPCA) from Bos taurus (Bovine).